The primary structure comprises 67 residues: Putative cytosolic sulfotransferase 2 (67 aa).

3'-phosphoadenylyl sulfate is bound at residue 31–33 (RDG).

Belongs to the sulfotransferase 1 family.

The protein resides in the cytoplasm. Functionally, sulfotransferase that utilizes 3'-phospho-5'-adenylyl sulfate (PAPS) as sulfonate donor. The protein is Putative cytosolic sulfotransferase 2 (SOT2) of Arabidopsis thaliana (Mouse-ear cress).